A 382-amino-acid polypeptide reads, in one-letter code: Galactokinase (382 aa).

A substrate-binding site is contributed by 34–37 (EHTD). 124-130 (GAGLSSS) is a binding site for ATP. Residues Ser130 and Glu162 each contribute to the Mg(2+) site. The active-site Proton acceptor is the Asp174. Tyr223 is a binding site for substrate.

It belongs to the GHMP kinase family. GalK subfamily.

The protein localises to the cytoplasm. It carries out the reaction alpha-D-galactose + ATP = alpha-D-galactose 1-phosphate + ADP + H(+). It participates in carbohydrate metabolism; galactose metabolism. In terms of biological role, catalyzes the transfer of the gamma-phosphate of ATP to D-galactose to form alpha-D-galactose-1-phosphate (Gal-1-P). The polypeptide is Galactokinase (Salmonella choleraesuis (strain SC-B67)).